Consider the following 480-residue polypeptide: NADH-quinone oxidoreductase subunit N (480 aa).

The next 14 helical transmembrane spans lie at 12–32, 41–61, 80–100, 105–125, 130–150, 165–185, 204–224, 237–257, 275–295, 300–320, 326–346, 372–392, 406–428, and 450–470; these read LLIPELVLAGGAMALLMLGVF, LVQWLTVGLLAAAALAALFLV, FSKTAIGLVAAIAMLLAMPYL, LGKIEYPVLVVLAVTGMMMMV, LIAMYMGIELQSLALYVLAAF, FVLGALSSGLLLYGASLVYGF, IGLTVGLVFVICGLAFKVSAA, APTPVTAFFATAPKFAAIVLL, VIWMIAVLSMAVGAFGALTQQ, LMAYSSISNMGYALVAVAAAS, ALLVFMVLYMVGAIGSFATIL, GWSMTALMFSIGGLPFMVGFF, LMILAVLAVLFSVVGAAYYLRIV, and IARIAGLATVLLLPVLGWLVF.

It belongs to the complex I subunit 2 family. In terms of assembly, NDH-1 is composed of 14 different subunits. Subunits NuoA, H, J, K, L, M, N constitute the membrane sector of the complex.

It localises to the cell inner membrane. It carries out the reaction a quinone + NADH + 5 H(+)(in) = a quinol + NAD(+) + 4 H(+)(out). Its function is as follows. NDH-1 shuttles electrons from NADH, via FMN and iron-sulfur (Fe-S) centers, to quinones in the respiratory chain. The immediate electron acceptor for the enzyme in this species is believed to be ubiquinone. Couples the redox reaction to proton translocation (for every two electrons transferred, four hydrogen ions are translocated across the cytoplasmic membrane), and thus conserves the redox energy in a proton gradient. This Maricaulis maris (strain MCS10) (Caulobacter maris) protein is NADH-quinone oxidoreductase subunit N.